The following is a 575-amino-acid chain: Cyclic nucleotide-gated channel alpha-4 (575 aa).

Residues 1–38 (MSQDSKVKTTESTPPAPTKARKWLPVLDPSGDYYYWWL) lie on the Cytoplasmic side of the membrane. A helical transmembrane segment spans residues 39-60 (NTMVFPIMYNLIIVVCRACFPD). Residues 61 to 70 (LQHSYLVAWF) are Extracellular-facing. The chain crosses the membrane as a helical span at residues 71–91 (VLDYTSDLLYLLDIGVRFHTG). Residues 92-116 (FLEQGILVVDKSMIASRYVRTWSFL) lie on the Cytoplasmic side of the membrane. The helical transmembrane segment at 117-135 (LDLASLVPTDAAYVQLGPH) threads the bilayer. The Extracellular segment spans residues 136–140 (IPTLR). The chain crosses the membrane as a helical span at residues 141-159 (LNRFLRVPRLFEAFDRTET). Residues 160–166 (RTAYPNA) are Cytoplasmic-facing. The ion conduction pathway stretch occupies residues 164–272 (PNAFRIAKLM…GSMSSVIYNM (109 aa)). Residues 167-190 (FRIAKLMIYIFVVIHWNSCLYFAL) traverse the membrane as a helical segment. Over 191–213 (SRYLGFGRDAWVYPDPAQPGFER) the chain is Extracellular. The next 2 membrane-spanning stretches (helical) occupy residues 214-248 (LRRQ…LFMV) and 249-273 (GDFL…YNMN). The selectivity filter stretch occupies residues 231–234 (TVGD). Residues 274–350 (TADAAFYPDH…STLSRVQIFQ (77 aa)) form a C-linker region. The Cytoplasmic portion of the chain corresponds to 274 to 575 (TADAAFYPDH…AGQEGPSGLE (302 aa)). The IQ-type signature appears at 292–302 (LQHVNRRLERR). 348–471 (IFQNCEASLL…AVMEEKGREI (124 aa)) contributes to the a nucleoside 3',5'-cyclic phosphate binding site. The tract at residues 354 to 474 (ASLLEELVLK…EEKGREILLK (121 aa)) is cyclic nucleotide-binding domain. Residues Gly414, Ser417, Arg430, and Thr431 each coordinate 3',5'-cyclic GMP. 3',5'-cyclic AMP is bound by residues Arg430 and Thr431. Residues 493-547 (TESRLKGLDQQLDDLQTKFARLLAELESSALKIAYRIERLEWQTREWPMPDDMGE) are a coiled coil. The segment at 536–575 (TREWPMPDDMGEADDEAEPGEGTSKDGEEKAGQEGPSGLE) is disordered. The segment covering 544–554 (DMGEADDEAEP) has biased composition (acidic residues). The span at 558-567 (TSKDGEEKAG) shows a compositional bias: basic and acidic residues.

This sequence belongs to the cyclic nucleotide-gated cation channel (TC 1.A.1.5) family. CNGA4 subfamily. As to quaternary structure, the olfactory cyclic nucleotide-gated channel is an heterotetramer composed of CNGA2, CNGA4 and CNGB1b subunits with 2:1:1 stoichiometry. In terms of tissue distribution, expressed in the olfactory epithelium.

The protein resides in the cell projection. Its subcellular location is the cilium membrane. The enzyme catalyses Ca(2+)(in) = Ca(2+)(out). The catalysed reaction is Na(+)(in) = Na(+)(out). It catalyses the reaction K(+)(in) = K(+)(out). It carries out the reaction NH4(+)(in) = NH4(+)(out). The enzyme catalyses Rb(+)(in) = Rb(+)(out). The catalysed reaction is Li(+)(in) = Li(+)(out). It catalyses the reaction Cs(+)(in) = Cs(+)(out). With respect to regulation, ca(2+)-calmodulin exerts its inhibitory effect in cAMP sensitivity by binding to IQ-like motif of CNGA4 and preferably binds to the channel in the closed state. Inhibition by PIP3 of the CNG channel probably occurs via CGNA2 binding. Functionally, pore-forming subunit of the olfactory cyclic nucleotide-gated channel. Operates in the cilia of olfactory sensory neurons where chemical stimulation of the odorant is converted to an electrical signal. Mediates odorant-induced cAMP-dependent Ca(2+) influx triggering neuron depolarization. The rise of intracellular Ca(2+) levels potentiates the olfactory response by activating Ca(2+)-dependent Cl(-) channels, but it also serves as a negative feedback signal to desensitize the channel for rapid adaptation to odorants. Conducts cGMP- and cAMP-gated ion currents, with permeability for monovalent and divalent cations. Conducts cAMP- and cGMP-gated ion currents, with permeability for monovalent and divalent cations. May conduct nitric oxide-gated Ca(2+) currents relevant to neurons of vomeronasal organ, a system involved in the perception of pheromones. The sequence is that of Cyclic nucleotide-gated channel alpha-4 from Mus musculus (Mouse).